We begin with the raw amino-acid sequence, 419 residues long: UDP-N-acetylglucosamine 1-carboxyvinyltransferase (419 aa).

Lys-22–Asn-23 serves as a coordination point for phosphoenolpyruvate. Residue Arg-91 participates in UDP-N-acetyl-alpha-D-glucosamine binding. Cys-115 (proton donor) is an active-site residue. The residue at position 115 (Cys-115) is a 2-(S-cysteinyl)pyruvic acid O-phosphothioketal. Residues Arg-120–Leu-124, Lys-160–Val-163, Asp-305, and Val-327 contribute to the UDP-N-acetyl-alpha-D-glucosamine site.

This sequence belongs to the EPSP synthase family. MurA subfamily.

The protein localises to the cytoplasm. The catalysed reaction is phosphoenolpyruvate + UDP-N-acetyl-alpha-D-glucosamine = UDP-N-acetyl-3-O-(1-carboxyvinyl)-alpha-D-glucosamine + phosphate. Its pathway is cell wall biogenesis; peptidoglycan biosynthesis. Its function is as follows. Cell wall formation. Adds enolpyruvyl to UDP-N-acetylglucosamine. This Escherichia coli (strain K12 / MC4100 / BW2952) protein is UDP-N-acetylglucosamine 1-carboxyvinyltransferase.